We begin with the raw amino-acid sequence, 342 residues long: MHTAEFLETEPTEISSVLAGGYNHPLLRQWQSERQLTKNMLIFPLFISDNPDDFTEIDSLPNINRIGVNRLKDYLKPLVAKGLRSVILFGVPLIPGTKDPVGTAADDPAGPVIQGIKFIREYFPELYIICDVCLCEYTSHGHCGVLYDDGTINRERSVSRLAAVAVNYAKAGAHCVAPSDMIDGRIRDIKRGLINANLAHKTFVLSYAAKFSGNLYGPFRDAACSAPSNGDRKCYQLPPAGRGLARRALERDMSEGADGIIVKPSTFYLDIMRDASEICKDLPICAYHVSGEYAMLHAAAEKGVVDLKTIAFESHQGFLRAGARLIITYLAPEFLDWLDEEN.

Residues C133, C135, and C143 each contribute to the Zn(2+) site. K210 functions as the Schiff-base intermediate with substrate in the catalytic mechanism. 2 residues coordinate 5-aminolevulinate: R220 and R232. S254 carries the post-translational modification Phosphoserine. The Schiff-base intermediate with substrate role is filled by K263. Residues S290 and Y329 each coordinate 5-aminolevulinate.

This sequence belongs to the ALAD family. In terms of assembly, homooctamer. Requires Zn(2+) as cofactor.

The enzyme catalyses 2 5-aminolevulinate = porphobilinogen + 2 H2O + H(+). It functions in the pathway porphyrin-containing compound metabolism; protoporphyrin-IX biosynthesis; coproporphyrinogen-III from 5-aminolevulinate: step 1/4. Inhibited by divalent lead ions. Catalyzes an early step in the biosynthesis of tetrapyrroles. Binds two molecules of 5-aminolevulinate per subunit, each at a distinct site, and catalyzes their condensation to form porphobilinogen. The chain is Delta-aminolevulinic acid dehydratase (HEM2) from Saccharomyces cerevisiae (strain ATCC 204508 / S288c) (Baker's yeast).